A 251-amino-acid chain; its full sequence is Small ribosomal subunit protein uS3 (251 aa).

A KH type-2 domain is found at 39–109; it reads IRNYVQARLK…EVKIDVIEVI (71 aa). Residues 222–239 show a composition bias toward basic and acidic residues; the sequence is LKKIKDRRGEQRSRGRDS. Residues 222-251 are disordered; that stretch reads LKKIKDRRGEQRSRGRDSRNRRRRKPRQTT. Over residues 240 to 251 the composition is skewed to basic residues; that stretch reads RNRRRRKPRQTT.

Belongs to the universal ribosomal protein uS3 family. As to quaternary structure, part of the 30S ribosomal subunit. Forms a tight complex with proteins S10 and S14.

Functionally, binds the lower part of the 30S subunit head. Binds mRNA in the 70S ribosome, positioning it for translation. In Prosthecochloris aestuarii (strain DSM 271 / SK 413), this protein is Small ribosomal subunit protein uS3.